We begin with the raw amino-acid sequence, 153 residues long: uncharacterized protein (153 aa).

Helical transmembrane passes span 1 to 21 and 106 to 126; these read MAAT…LFFS and IVPI…TVYI.

The protein localises to the membrane. This is an uncharacterized protein from Saccharomyces cerevisiae (strain ATCC 204508 / S288c) (Baker's yeast).